Consider the following 297-residue polypeptide: Protease HtpX homolog (297 aa).

2 consecutive transmembrane segments (helical) span residues 5-25 (IFLFLLSNILVITTIGIVLSI) and 44-64 (IVALLVFSAVVGFVGSFMSLL). Zn(2+) is bound at residue His-155. Residue Glu-156 is part of the active site. His-159 serves as a coordination point for Zn(2+). A run of 2 helical transmembrane segments spans residues 170-190 (LLQGIVNTFVVFFARIAAWAV) and 204-224 (FIAVIVFQIVFSILGSLVVFA). Residue Glu-230 coordinates Zn(2+).

It belongs to the peptidase M48B family. It depends on Zn(2+) as a cofactor.

The protein localises to the cell membrane. The chain is Protease HtpX homolog from Bacillus licheniformis (strain ATCC 14580 / DSM 13 / JCM 2505 / CCUG 7422 / NBRC 12200 / NCIMB 9375 / NCTC 10341 / NRRL NRS-1264 / Gibson 46).